A 367-amino-acid polypeptide reads, in one-letter code: 3-isopropylmalate dehydrogenase (367 aa).

75–88 (GPKWDGIERSKRPE) is a binding site for NAD(+). Substrate contacts are provided by Arg95, Arg105, Arg133, and Asp230. Mg(2+) is bound by residues Asp230, Asp254, and Asp258. Residue 288-300 (GSAPDIAGQDIAN) coordinates NAD(+).

It belongs to the isocitrate and isopropylmalate dehydrogenases family. LeuB type 1 subfamily. In terms of assembly, homodimer. Mg(2+) serves as cofactor. The cofactor is Mn(2+).

It localises to the cytoplasm. The enzyme catalyses (2R,3S)-3-isopropylmalate + NAD(+) = 4-methyl-2-oxopentanoate + CO2 + NADH. Its pathway is amino-acid biosynthesis; L-leucine biosynthesis; L-leucine from 3-methyl-2-oxobutanoate: step 3/4. Functionally, catalyzes the oxidation of 3-carboxy-2-hydroxy-4-methylpentanoate (3-isopropylmalate) to 3-carboxy-4-methyl-2-oxopentanoate. The product decarboxylates to 4-methyl-2 oxopentanoate. The polypeptide is 3-isopropylmalate dehydrogenase (Psychrobacter arcticus (strain DSM 17307 / VKM B-2377 / 273-4)).